Reading from the N-terminus, the 388-residue chain is DNA replication and repair protein RecF (388 aa).

Residue Gly30 to Thr37 coordinates ATP.

Belongs to the RecF family.

It is found in the cytoplasm. Its function is as follows. The RecF protein is involved in DNA metabolism; it is required for DNA replication and normal SOS inducibility. RecF binds preferentially to single-stranded, linear DNA. It also seems to bind ATP. This chain is DNA replication and repair protein RecF, found in Nocardia farcinica (strain IFM 10152).